A 935-amino-acid polypeptide reads, in one-letter code: Isoleucine--tRNA ligase (935 aa).

A 'HIGH' region motif is present at residues 58-68 (PYANGSIHVGH). E558 lines the L-isoleucyl-5'-AMP pocket. A 'KMSKS' region motif is present at residues 599–603 (KMSKS). K602 lines the ATP pocket. 4 residues coordinate Zn(2+): C897, C900, C917, and C920.

Belongs to the class-I aminoacyl-tRNA synthetase family. IleS type 1 subfamily. As to quaternary structure, monomer. Zn(2+) is required as a cofactor.

It is found in the cytoplasm. It catalyses the reaction tRNA(Ile) + L-isoleucine + ATP = L-isoleucyl-tRNA(Ile) + AMP + diphosphate. Its function is as follows. Catalyzes the attachment of isoleucine to tRNA(Ile). As IleRS can inadvertently accommodate and process structurally similar amino acids such as valine, to avoid such errors it has two additional distinct tRNA(Ile)-dependent editing activities. One activity is designated as 'pretransfer' editing and involves the hydrolysis of activated Val-AMP. The other activity is designated 'posttransfer' editing and involves deacylation of mischarged Val-tRNA(Ile). The sequence is that of Isoleucine--tRNA ligase from Francisella philomiragia subsp. philomiragia (strain ATCC 25017 / CCUG 19701 / FSC 153 / O#319-036).